Here is an 833-residue protein sequence, read N- to C-terminus: Leucine--tRNA ligase (833 aa).

Positions 41–52 (PYPSGAGLHVGH) match the 'HIGH' region motif. The 'KMSKS' region motif lies at 610–614 (KMSKS). Position 613 (lysine 613) interacts with ATP.

The protein belongs to the class-I aminoacyl-tRNA synthetase family.

The protein resides in the cytoplasm. It catalyses the reaction tRNA(Leu) + L-leucine + ATP = L-leucyl-tRNA(Leu) + AMP + diphosphate. The polypeptide is Leucine--tRNA ligase (Streptococcus pyogenes serotype M3 (strain ATCC BAA-595 / MGAS315)).